A 112-amino-acid polypeptide reads, in one-letter code: Probable 4-amino-4-deoxy-L-arabinose-phosphoundecaprenol flippase subunit ArnE (112 aa).

One can recognise an EamA domain in the interval 35-110 (RHILFWLGMA…IVVGIVILGT (76 aa)). The next 3 membrane-spanning stretches (helical) occupy residues 37-57 (ILFW…LWLS), 66-86 (IAYP…WGIW), and 89-109 (PVAR…VILG).

It belongs to the ArnE family. Heterodimer of ArnE and ArnF.

The protein localises to the cell inner membrane. It participates in bacterial outer membrane biogenesis; lipopolysaccharide biosynthesis. Functionally, translocates 4-amino-4-deoxy-L-arabinose-phosphoundecaprenol (alpha-L-Ara4N-phosphoundecaprenol) from the cytoplasmic to the periplasmic side of the inner membrane. In Klebsiella pneumoniae (strain 342), this protein is Probable 4-amino-4-deoxy-L-arabinose-phosphoundecaprenol flippase subunit ArnE.